Consider the following 288-residue polypeptide: Ice-binding protein (288 aa).

Positions 1 to 22 (MFSTTLINTFSLGLLAVVSVVA) are cleaved as a signal peptide. Short sequence motifs (ice-binding site motif (T-A/G-X-T/N)) lie at residues 75 to 78 (TAGN) and 154 to 157 (TAFN). Asparagine 194 carries an N-linked (GlcNAc...) asparagine glycan. 2 short sequence motifs (ice-binding site motif (T-A/G-X-T/N)) span residues 196–199 (TGVT) and 265–268 (TGAT).

It belongs to the ice-binding protein family.

It is found in the secreted. Binds ice crystals and most probably inhibits their growth in order to prevent cell damage from extracellular ice. The polypeptide is Ice-binding protein (Lentinula edodes (Shiitake mushroom)).